A 404-amino-acid polypeptide reads, in one-letter code: MQDKNVKIQGNLVRVHLSGSFLKFQAIYKVKKLYLQLLILSVIAFFWGLLGVVFVQFSGLYDIGIASISQGLARLADYLIRSNKVSVDADTIYNVIFWLSQILINIPLFVLGWYKISKKFTLLTLYFVVVSNVFGFAFSYIPGVENFFLFANLTELTKANGGLEQAINNQGVQLIFWEQTAEKQISLMFYALIWGFLQAVFYSVILIIDASSGGLDFLAFWYSEKKHKDIGGILFIVNTLSFLIGYTIGTYLTGSLLAQGFQEDRQKPFGVAFFLSPNLVFTIFMNIILGIFTSYFFPKYQFVKVEVYGKHMEQMRNYLLSSNQSFAVTMFEVEGGYSRQKNQVLVTNCLFTKTAELLEAVRRVDPDALFSITFIKKLDGYIYERKAPDKVVPPVKDPVKAQEN.

The next 6 membrane-spanning stretches (helical) occupy residues 37–57, 92–112, 122–142, 188–208, 230–250, and 272–292; these read LLILSVIAFFWGLLGVVFVQF, IYNVIFWLSQILINIPLFVLG, LLTLYFVVVSNVFGFAFSYIP, MFYALIWGFLQAVFYSVILII, IGGILFIVNTLSFLIGYTIGT, and AFFLSPNLVFTIFMNIILGIF.

It is found in the cell membrane. This is an uncharacterized protein from Mycoplasma pneumoniae (strain ATCC 29342 / M129 / Subtype 1) (Mycoplasmoides pneumoniae).